The sequence spans 209 residues: Small ribosomal subunit protein uS4 (209 aa).

The 67-residue stretch at 98–164 (RRLDNVVYRL…LPIKNAIELN (67 aa)) folds into the S4 RNA-binding domain.

This sequence belongs to the universal ribosomal protein uS4 family. As to quaternary structure, part of the 30S ribosomal subunit. Contacts protein S5. The interaction surface between S4 and S5 is involved in control of translational fidelity.

In terms of biological role, one of the primary rRNA binding proteins, it binds directly to 16S rRNA where it nucleates assembly of the body of the 30S subunit. Functionally, with S5 and S12 plays an important role in translational accuracy. The sequence is that of Small ribosomal subunit protein uS4 from Thermosipho melanesiensis (strain DSM 12029 / CIP 104789 / BI429).